A 412-amino-acid polypeptide reads, in one-letter code: MKAEIMAIGTEILLGDIVNTNAQFLAKELANLGIGVYHQSVVGDNSERILEAFDNAFKNCDTIITTGGLGPTKDDLSKELAAKYFNMEMCLREELLCDLEDYFKKNNLEMTENNKKQCYFPKEAIILPNPNGTAPGAILEGENNKRIILLPGPPREMEPMFTNHVVPYLSKFTDSVLVSKILRVFGIGESKMDDLVCDLLDNENPTVAPYAKNIDVILRITAKGKDKEEAEKLIAPMEKEIRKRLGDNIYGEGEVTLEEVVGKLLVDKKMTVSTAESCTGGMVASTLINYPGISEVFMEGAVTYSNEAKMKRLGVKKETLEDFGAVSEECAREMAKGIAKNAETRIGISITGIAGPGGGTEEKPVGLVYAGLCIDGITKVKKFNFKADRQKVRTRTMMNVLDWLRRELEKID.

Belongs to the CinA family.

The chain is Putative competence-damage inducible protein from Clostridium perfringens (strain SM101 / Type A).